The primary structure comprises 587 residues: Lipoprotein LpqB (587 aa).

A signal peptide spans 1-19 (MERLMRLTILLFLGAVLAG). The N-palmitoyl cysteine moiety is linked to residue cysteine 20. Cysteine 20 carries S-diacylglycerol cysteine lipidation.

It belongs to the LpqB lipoprotein family. Interacts with MtrB, probably extracytoplasmically.

It is found in the cell membrane. The protein localises to the secreted. Its subcellular location is the cell wall. Functionally, may modulate activity of the MtrAB system in controlling homeostasis of the cell wall and cell division. The protein is Lipoprotein LpqB of Mycobacterium tuberculosis (strain CDC 1551 / Oshkosh).